A 372-amino-acid chain; its full sequence is MQSVIAQAKRIVVKVGSSLVTNDGKGLDHDAIARWAAQIAKLRGTGKEVVLVSSGAIAEGMQRLGWARRPKEIHELQAAAAVGQMGLAQVYESQFGRYGIRTAQVLLTHADLADRERYLNARSTLLTLLSLGVVPIINENDTVVTDEIKFGDNDTLGALVTNLIEGDALVILTDQRGLYTADPRKDPNAEFVHEALAGTPELEAMAGGAGSSIGRGGMLTKILAAKRAAKSGAHTTIASGREADVLGRLAAGEAIGTQLLAPTGRLTARKQWMADHLQLRGRVIIDAGAVEKLTSGGKSLLPIGVVEVQGEFARGEVIACASPEGKEVARGITNYSSAEARLIARKPSSEIESVLGHLNEPELIHRDNLVLV.

Lys-14 provides a ligand contact to ATP. Residues Ser-54, Asp-141, and Asn-153 each coordinate substrate. 173-174 (TD) is an ATP binding site. The region spanning 280-358 (RGRVIIDAGA…SEIESVLGHL (79 aa)) is the PUA domain.

It belongs to the glutamate 5-kinase family.

It localises to the cytoplasm. It catalyses the reaction L-glutamate + ATP = L-glutamyl 5-phosphate + ADP. Its pathway is amino-acid biosynthesis; L-proline biosynthesis; L-glutamate 5-semialdehyde from L-glutamate: step 1/2. Catalyzes the transfer of a phosphate group to glutamate to form L-glutamate 5-phosphate. The protein is Glutamate 5-kinase of Cupriavidus metallidurans (strain ATCC 43123 / DSM 2839 / NBRC 102507 / CH34) (Ralstonia metallidurans).